The primary structure comprises 188 residues: MTEYKLVVVGAGGVGKSALTIQLIQNHFVDEYDPTIEDSYRKQVVIDGETCLLDILDTAGQEEYSAMRDQYMRTGEGFLCVFAINNTKSFEDIHHYREQIKRVKDSEDVPMVLVGNKCDLPTRTVDTKQAQDLARSFGIPFIETSAKTRQGVDDAFYTLVREIRKHKEKMSKEGKKKKKKSKTKCILM.

GTP contacts are provided by residues 10-18 (GAGGVGKSA), 29-35 (VDEYDPT), 59-60 (AG), and 116-119 (NKCD). The short motif at 32 to 40 (YDPTIEDSY) is the Effector region element. The segment at 167 to 188 (KEKMSKEGKKKKKKSKTKCILM) is disordered. Cysteine methyl ester is present on C185. A lipid anchor (S-farnesyl cysteine) is attached at C185. Positions 186–188 (ILM) are cleaved as a propeptide — removed in mature form.

It belongs to the small GTPase superfamily. Ras family.

It localises to the cell membrane. The protein localises to the cytoplasm. The catalysed reaction is GTP + H2O = GDP + phosphate + H(+). Its activity is regulated as follows. Alternates between an inactive form bound to GDP and an active form bound to GTP. Activated by a guanine nucleotide-exchange factor (GEF) and inactivated by a GTPase-activating protein (GAP). Its function is as follows. Ras proteins bind GDP/GTP and possess intrinsic GTPase activity. Plays an important role in the regulation of cell proliferation. The sequence is that of GTPase KRas (kras1) from Oryzias latipes (Japanese rice fish).